Consider the following 179-residue polypeptide: Cytochrome b6-f complex iron-sulfur subunit (179 aa).

Residues 21–43 traverse the membrane as a helical segment; sequence LLTFGSVTGVALGALYPVVNYFI. The Rieske domain maps to 61-162; sequence GNDVVLSKFL…VSVTDDKVFL (102 aa). Residues Cys-108, His-110, Cys-126, and His-129 each contribute to the [2Fe-2S] cluster site. Cys-113 and Cys-128 form a disulfide bridge.

It belongs to the Rieske iron-sulfur protein family. As to quaternary structure, the 4 large subunits of the cytochrome b6-f complex are cytochrome b6, subunit IV (17 kDa polypeptide, PetD), cytochrome f and the Rieske protein, while the 4 small subunits are PetG, PetL, PetM and PetN. The complex functions as a dimer. [2Fe-2S] cluster serves as cofactor.

The protein resides in the cellular thylakoid membrane. The catalysed reaction is 2 oxidized [plastocyanin] + a plastoquinol + 2 H(+)(in) = 2 reduced [plastocyanin] + a plastoquinone + 4 H(+)(out). Its function is as follows. Component of the cytochrome b6-f complex, which mediates electron transfer between photosystem II (PSII) and photosystem I (PSI), cyclic electron flow around PSI, and state transitions. The protein is Cytochrome b6-f complex iron-sulfur subunit of Synechococcus elongatus (strain ATCC 33912 / PCC 7942 / FACHB-805) (Anacystis nidulans R2).